Here is a 184-residue protein sequence, read N- to C-terminus: MNHLRTAVLYTIISAVFLGLGYPLIMTGLAQWIFPRQANGSLIVRNGQVIGSKLIGQTFSGAGYFHSRPSAAGNGYDAESSGGSNLAPTNHALIQQVEQRAAAEQVGATKVPVDLVTASASGLDPDITPAAAYYQAPRIAKARHLPLAAVRKLIAEQTTARQFGLLGEPRVNVLAINLKLDQMH.

Residues threonine 6–methionine 26 traverse the membrane as a helical segment.

It belongs to the KdpC family. The system is composed of three essential subunits: KdpA, KdpB and KdpC.

It localises to the cell inner membrane. Part of the high-affinity ATP-driven potassium transport (or Kdp) system, which catalyzes the hydrolysis of ATP coupled with the electrogenic transport of potassium into the cytoplasm. This subunit acts as a catalytic chaperone that increases the ATP-binding affinity of the ATP-hydrolyzing subunit KdpB by the formation of a transient KdpB/KdpC/ATP ternary complex. This is Potassium-transporting ATPase KdpC subunit from Acidobacterium capsulatum (strain ATCC 51196 / DSM 11244 / BCRC 80197 / JCM 7670 / NBRC 15755 / NCIMB 13165 / 161).